A 127-amino-acid chain; its full sequence is Protein ApaG (127 aa).

An ApaG domain is found at 3–127 (DDPRYRVEVE…FVLSVPRTLH (125 aa)).

The protein is Protein ApaG of Xanthomonas campestris pv. campestris (strain 8004).